Reading from the N-terminus, the 245-residue chain is uncharacterized protein (245 aa).

This sequence to M.tuberculosis Rv2927c.

This is an uncharacterized protein from Mycobacterium leprae (strain TN).